The sequence spans 470 residues: Synaptotagmin-17 (470 aa).

The segment at Pro54–Arg112 is disordered. Residues Ser92–Arg112 are compositionally biased toward low complexity. Phosphoserine is present on residues Ser114 and Ser115. 2 consecutive C2 domains span residues Gln180–Lys306 and Glu317–His451.

This sequence belongs to the synaptotagmin family.

It is found in the membrane. Its function is as follows. Plays a role in dendrite formation by melanocytes. In Mus musculus (Mouse), this protein is Synaptotagmin-17 (Syt17).